The chain runs to 175 residues: NADH-ubiquinone oxidoreductase chain 6 (175 aa).

A run of 5 helical transmembrane segments spans residues 1–21, 25–45, 47–67, 88–108, and 149–169; these read MTMY…VGFS, SPIY…GIVL, FGGS…MLVV, TVFG…YYAL, and YGTW…VVIM.

It belongs to the complex I subunit 6 family. Core subunit of respiratory chain NADH dehydrogenase (Complex I) which is composed of 45 different subunits.

The protein localises to the mitochondrion inner membrane. The enzyme catalyses a ubiquinone + NADH + 5 H(+)(in) = a ubiquinol + NAD(+) + 4 H(+)(out). Core subunit of the mitochondrial membrane respiratory chain NADH dehydrogenase (Complex I) which catalyzes electron transfer from NADH through the respiratory chain, using ubiquinone as an electron acceptor. Essential for the catalytic activity and assembly of complex I. The protein is NADH-ubiquinone oxidoreductase chain 6 (MT-ND6) of Sus scrofa (Pig).